The chain runs to 932 residues: Glycine dehydrogenase (decarboxylating) (932 aa).

At Lys-685 the chain carries N6-(pyridoxal phosphate)lysine.

Belongs to the GcvP family. As to quaternary structure, the glycine cleavage system is composed of four proteins: P, T, L and H. It depends on pyridoxal 5'-phosphate as a cofactor.

It catalyses the reaction N(6)-[(R)-lipoyl]-L-lysyl-[glycine-cleavage complex H protein] + glycine + H(+) = N(6)-[(R)-S(8)-aminomethyldihydrolipoyl]-L-lysyl-[glycine-cleavage complex H protein] + CO2. In terms of biological role, the glycine cleavage system catalyzes the degradation of glycine. The P protein binds the alpha-amino group of glycine through its pyridoxal phosphate cofactor; CO(2) is released and the remaining methylamine moiety is then transferred to the lipoamide cofactor of the H protein. The polypeptide is Glycine dehydrogenase (decarboxylating) (Brucella melitensis biotype 1 (strain ATCC 23456 / CCUG 17765 / NCTC 10094 / 16M)).